The sequence spans 214 residues: Imidazole glycerol phosphate synthase subunit HisH (214 aa).

One can recognise a Glutamine amidotransferase type-1 domain in the interval 3–211 (IIAVIDYDMG…VEQVQATLAT (209 aa)). The active-site Nucleophile is Cys-81. Catalysis depends on residues His-186 and Glu-188.

As to quaternary structure, heterodimer of HisH and HisF.

The protein resides in the cytoplasm. It carries out the reaction 5-[(5-phospho-1-deoxy-D-ribulos-1-ylimino)methylamino]-1-(5-phospho-beta-D-ribosyl)imidazole-4-carboxamide + L-glutamine = D-erythro-1-(imidazol-4-yl)glycerol 3-phosphate + 5-amino-1-(5-phospho-beta-D-ribosyl)imidazole-4-carboxamide + L-glutamate + H(+). The catalysed reaction is L-glutamine + H2O = L-glutamate + NH4(+). Its pathway is amino-acid biosynthesis; L-histidine biosynthesis; L-histidine from 5-phospho-alpha-D-ribose 1-diphosphate: step 5/9. Functionally, IGPS catalyzes the conversion of PRFAR and glutamine to IGP, AICAR and glutamate. The HisH subunit catalyzes the hydrolysis of glutamine to glutamate and ammonia as part of the synthesis of IGP and AICAR. The resulting ammonia molecule is channeled to the active site of HisF. The polypeptide is Imidazole glycerol phosphate synthase subunit HisH (Acaryochloris marina (strain MBIC 11017)).